Reading from the N-terminus, the 670-residue chain is Tripeptidyl-peptidase SED1 (670 aa).

An N-terminal signal peptide occupies residues 1–20; that stretch reads MSTMIFMYFIYIVLYASGIA. A propeptide spans 21–231 (removed in mature form); that stretch reads ANLSYHVHEK…VGLLKNKILS (211 aa). The Peptidase S53 domain occupies 241-669; sequence LITPDCLRAL…DRMLDLFLQL (429 aa). Catalysis depends on charge relay system residues E318 and D322. N-linked (GlcNAc...) asparagine glycans are attached at residues N334, N387, N488, N508, and N551. Residue S586 is the Charge relay system of the active site. Residues D627, V628, G647, and D649 each coordinate Ca(2+).

Ca(2+) is required as a cofactor.

Its subcellular location is the secreted. The protein localises to the extracellular space. The enzyme catalyses Release of an N-terminal tripeptide from a polypeptide.. Secreted tripeptidyl-peptidase which degrades proteins at acidic pHs and is involved in virulence. In Arthroderma otae (strain ATCC MYA-4605 / CBS 113480) (Microsporum canis), this protein is Tripeptidyl-peptidase SED1 (SED1).